Consider the following 353-residue polypeptide: Photosystem II D2 protein (353 aa).

Position 2 is an N-acetylthreonine (Thr2). Position 2 is a phosphothreonine (Thr2). A helical transmembrane segment spans residues 41 to 61 (CAYFAIGGWFTGTTFVTSWYT). His118 lines the chlorophyll a pocket. A helical membrane pass occupies residues 125 to 141 (GFMLRQFELARSVQLRP). The pheophytin a site is built by Gln130 and Asn143. The helical transmembrane segment at 153-166 (VFVSVFLIYPLGQS) threads the bilayer. Residue His198 participates in chlorophyll a binding. Residues 208 to 228 (AALLCAIHGATVENTLFEDGD) traverse the membrane as a helical segment. 2 residues coordinate a plastoquinone: His215 and Phe262. His215 serves as a coordination point for Fe cation. His269 serves as a coordination point for Fe cation. The helical transmembrane segment at 279–295 (GLWMSALGVVGLALNLR) threads the bilayer.

It belongs to the reaction center PufL/M/PsbA/D family. As to quaternary structure, PSII is composed of 1 copy each of membrane proteins PsbA, PsbB, PsbC, PsbD, PsbE, PsbF, PsbH, PsbI, PsbJ, PsbK, PsbL, PsbM, PsbT, PsbX, PsbY, PsbZ, Psb30/Ycf12, at least 3 peripheral proteins of the oxygen-evolving complex and a large number of cofactors. It forms dimeric complexes. It depends on The D1/D2 heterodimer binds P680, chlorophylls that are the primary electron donor of PSII, and subsequent electron acceptors. It shares a non-heme iron and each subunit binds pheophytin, quinone, additional chlorophylls, carotenoids and lipids. There is also a Cl(-1) ion associated with D1 and D2, which is required for oxygen evolution. The PSII complex binds additional chlorophylls, carotenoids and specific lipids. as a cofactor.

It is found in the plastid. The protein localises to the chloroplast thylakoid membrane. It catalyses the reaction 2 a plastoquinone + 4 hnu + 2 H2O = 2 a plastoquinol + O2. Photosystem II (PSII) is a light-driven water:plastoquinone oxidoreductase that uses light energy to abstract electrons from H(2)O, generating O(2) and a proton gradient subsequently used for ATP formation. It consists of a core antenna complex that captures photons, and an electron transfer chain that converts photonic excitation into a charge separation. The D1/D2 (PsbA/PsbD) reaction center heterodimer binds P680, the primary electron donor of PSII as well as several subsequent electron acceptors. D2 is needed for assembly of a stable PSII complex. This chain is Photosystem II D2 protein, found in Carica papaya (Papaya).